An 82-amino-acid chain; its full sequence is uncharacterized protein (82 aa).

This sequence to M.thermoautotrophicum MTH386.

This is an uncharacterized protein from Methanocaldococcus jannaschii (strain ATCC 43067 / DSM 2661 / JAL-1 / JCM 10045 / NBRC 100440) (Methanococcus jannaschii).